The chain runs to 346 residues: Methionine import ATP-binding protein MetN (346 aa).

Residues 2–243 enclose the ABC transporter domain; the sequence is VRFEGISKTY…PKHPITQSFL (242 aa). ATP is bound at residue 40–47; it reads GRSGAGKS.

It belongs to the ABC transporter superfamily. Methionine importer (TC 3.A.1.24) family. As to quaternary structure, the complex is composed of two ATP-binding proteins (MetN), two transmembrane proteins (MetI) and a solute-binding protein (MetQ).

The protein resides in the cell inner membrane. It carries out the reaction L-methionine(out) + ATP + H2O = L-methionine(in) + ADP + phosphate + H(+). The enzyme catalyses D-methionine(out) + ATP + H2O = D-methionine(in) + ADP + phosphate + H(+). In terms of biological role, part of the ABC transporter complex MetNIQ involved in methionine import. Responsible for energy coupling to the transport system. This Bradyrhizobium diazoefficiens (strain JCM 10833 / BCRC 13528 / IAM 13628 / NBRC 14792 / USDA 110) protein is Methionine import ATP-binding protein MetN.